The following is a 335-amino-acid chain: Probable peptide ABC transporter ATP-binding protein y4tR (335 aa).

The 250-residue stretch at 15-264 (VRDLETHFYG…PTHPYTRALM (250 aa)) folds into the ABC transporter domain. 49–56 (GESGCGKS) contributes to the ATP binding site.

This sequence belongs to the ABC transporter superfamily.

The protein resides in the cell inner membrane. Its function is as follows. Probably part of a binding-protein-dependent transport system y4tOPQRS for a peptide. Probably responsible for energy coupling to the transport system. The polypeptide is Probable peptide ABC transporter ATP-binding protein y4tR (Sinorhizobium fredii (strain NBRC 101917 / NGR234)).